Consider the following 474-residue polypeptide: 4-O-methyl-glucuronoyl methylesterase (474 aa).

The first 17 residues, methionine 1–alanine 17, serve as a signal peptide directing secretion. The CBM1 domain occupies alanine 19–leucine 55. The interval alanine 61 to serine 91 is disordered. The segment covering alanine 68–threonine 84 has biased composition (pro residues). A glycan (N-linked (GlcNAc...) asparagine) is linked at asparagine 120. The GXSYXG catalytic site motif motif lies at glycine 284–glycine 289. Intrachain disulfides connect cysteine 285–cysteine 421 and cysteine 317–cysteine 393. Catalysis depends on serine 286, which acts as the Nucleophile. Substrate-binding residues include lysine 290, glutamine 332, glutamate 340, and tryptophan 384. Catalysis depends on histidine 420, which acts as the Proton donor/acceptor.

Belongs to the carbohydrate esterase 15 (CE15) family. In terms of processing, N-glycosylated.

It is found in the secreted. It catalyses the reaction a 4-O-methyl-alpha-D-glucuronosyl ester derivative + H2O = 4-O-methyl-alpha-D-glucuronate derivative + an alcohol + H(+). In terms of biological role, glucuronoyl esterase which may play a significant role in biomass degradation, as it is considered to disconnect hemicellulose from lignin through the hydrolysis of the ester bond between 4-O-methyl-D-glucuronic acid residues of glucuronoxylans and aromatic alcohols of lignin. This Cerrena unicolor (Canker rot fungus) protein is 4-O-methyl-glucuronoyl methylesterase.